A 123-amino-acid chain; its full sequence is Angiogenin-2 (123 aa).

Position 1 is a pyrrolidone carboxylic acid (Gln-1). His-12 (proton acceptor) is an active-site residue. Intrachain disulfides connect Cys-25–Cys-80, Cys-38–Cys-91, and Cys-56–Cys-106. Positions 30–34 match the Nucleolar localization signal motif; it reads ERRNM. N-linked (GlcNAc...) asparagine glycosylation is present at Asn-33. Zn(2+)-binding residues include Asp-40, His-82, and His-113. His-113 serves as the catalytic Proton donor.

The protein belongs to the pancreatic ribonuclease family. In terms of tissue distribution, serum and milk.

The protein resides in the cytoplasmic vesicle. Its subcellular location is the secretory vesicle lumen. The protein localises to the secreted. It localises to the nucleus. It is found in the nucleolus. Its activity is regulated as follows. Divalent metal ions, such as Cu2+ and Zn2+, may inhibit the ribonucleolytic activity. Binds tightly to placental ribonuclease inhibitor and has very low ribonuclease activity. Has potent angiogenic activity. Angiogenin induces vascularization of normal and malignant tissues. Abolishes protein synthesis by specifically hydrolyzing cellular tRNAs. In Bos taurus (Bovine), this protein is Angiogenin-2.